An 84-amino-acid polypeptide reads, in one-letter code: Small ribosomal subunit protein uS17 (84 aa).

This sequence belongs to the universal ribosomal protein uS17 family. In terms of assembly, part of the 30S ribosomal subunit.

Its function is as follows. One of the primary rRNA binding proteins, it binds specifically to the 5'-end of 16S ribosomal RNA. The protein is Small ribosomal subunit protein uS17 of Borrelia hermsii (strain HS1 / DAH).